A 67-amino-acid chain; its full sequence is Large ribosomal subunit protein bL35 (67 aa).

Residues 1-41 are disordered; the sequence is MPKMKTHRGAAKRFKKTGTGKLKRSHAYTSHMFRHKSQKQK.

The protein belongs to the bacterial ribosomal protein bL35 family.

The protein is Large ribosomal subunit protein bL35 of Shouchella clausii (strain KSM-K16) (Alkalihalobacillus clausii).